We begin with the raw amino-acid sequence, 589 residues long: ATP-dependent lipid A-core flippase (589 aa).

6 consecutive transmembrane segments (helical) span residues 37–57 (ALAIGATIVASATEPFVPALL), 72–92 (LWLVPLALMLLFTVRGLSGFL), 151–171 (IMKLARDVLTLLALIGYLVYL), 173–193 (WKLMLVVALLFPAVAFVIQVL), 260–280 (SAITQVLAAMALSAVISIALL), and 286–306 (TTTVGGFVAFVTAMLLLIAPV). The 282-residue stretch at 37–318 (ALAIGATIVA…LSDAATPVTR (282 aa)) folds into the ABC transmembrane type-1 domain. Positions 350-584 (IEFADVSVIY…NGAYAHLYRL (235 aa)) constitute an ABC transporter domain. 384-391 (GASGSGKT) contributes to the ATP binding site.

This sequence belongs to the ABC transporter superfamily. Lipid exporter (TC 3.A.1.106) family. In terms of assembly, homodimer.

It localises to the cell inner membrane. The enzyme catalyses ATP + H2O + lipid A-core oligosaccharideSide 1 = ADP + phosphate + lipid A-core oligosaccharideSide 2.. In terms of biological role, involved in lipopolysaccharide (LPS) biosynthesis. Translocates lipid A-core from the inner to the outer leaflet of the inner membrane. Transmembrane domains (TMD) form a pore in the inner membrane and the ATP-binding domain (NBD) is responsible for energy generation. This chain is ATP-dependent lipid A-core flippase, found in Polaromonas sp. (strain JS666 / ATCC BAA-500).